The primary structure comprises 778 residues: Ribonucleoside-diphosphate reductase large subunit (778 aa).

Residues Ser177, 192–193 (SC), Gly221, 419–423 (NLCIE), and 613–617 (PTATS) each bind substrate. The cysteines at positions 193 and 439 are disulfide-linked. Asn419 acts as the Proton acceptor in catalysis. The active-site Cysteine radical intermediate is Cys421. The Proton acceptor role is filled by Glu423.

The protein belongs to the ribonucleoside diphosphate reductase large chain family. Heterotetramer composed of a homodimer of the large subunit (R1) and a homodimer of the small subunit (R2). Larger multisubunit protein complex are also active, composed of (R1)n(R2)n.

The enzyme catalyses a 2'-deoxyribonucleoside 5'-diphosphate + [thioredoxin]-disulfide + H2O = a ribonucleoside 5'-diphosphate + [thioredoxin]-dithiol. Its activity is regulated as follows. Under complex allosteric control mediated by deoxynucleoside triphosphates and ATP binding. The type of nucleotide bound at the specificity site determines substrate preference. It seems probable that ATP makes the enzyme reduce CDP and UDP, dGTP favors ADP reduction and dTTP favors GDP reduction. Functionally, ribonucleoside-diphosphate reductase holoenzyme provides the precursors necessary for viral DNA synthesis. Allows virus growth in non-dividing cells. Catalyzes the biosynthesis of deoxyribonucleotides from the corresponding ribonucleotides. In Ornithodoros (relapsing fever ticks), this protein is Ribonucleoside-diphosphate reductase large subunit.